A 99-amino-acid polypeptide reads, in one-letter code: Small ribosomal subunit protein bS20 (99 aa).

Over residues 1 to 20 (MASAKPKKKNPRLASGRKRV) the composition is skewed to basic residues. Positions 1-21 (MASAKPKKKNPRLASGRKRVR) are disordered.

It belongs to the bacterial ribosomal protein bS20 family.

In terms of biological role, binds directly to 16S ribosomal RNA. This chain is Small ribosomal subunit protein bS20, found in Verminephrobacter eiseniae (strain EF01-2).